The primary structure comprises 368 residues: tRNA-specific 2-thiouridylase MnmA (368 aa).

Residues 11–18 (GMSGGVDS) and M37 each bind ATP. Residues 97-99 (NPD) form an interaction with target base in tRNA region. C102 serves as the catalytic Nucleophile. An intrachain disulfide couples C102 to C199. Residue G127 participates in ATP binding. Residues 149-151 (KDQ) form an interaction with tRNA region. The active-site Cysteine persulfide intermediate is the C199. The interval 311–312 (RY) is interaction with tRNA.

This sequence belongs to the MnmA/TRMU family. Interacts with TusE.

The protein resides in the cytoplasm. It catalyses the reaction S-sulfanyl-L-cysteinyl-[protein] + uridine(34) in tRNA + AH2 + ATP = 2-thiouridine(34) in tRNA + L-cysteinyl-[protein] + A + AMP + diphosphate + H(+). Catalyzes the 2-thiolation of uridine at the wobble position (U34) of tRNA(Lys), tRNA(Glu) and tRNA(Gln), leading to the formation of s(2)U34, the first step of tRNA-mnm(5)s(2)U34 synthesis. Sulfur is provided by IscS, via a sulfur-relay system. Binds ATP and its substrate tRNAs. This Salmonella typhimurium (strain LT2 / SGSC1412 / ATCC 700720) protein is tRNA-specific 2-thiouridylase MnmA.